The following is a 179-amino-acid chain: PP2C-like domain-containing protein R307 (179 aa).

The 176-residue stretch at 1 to 176 (MNESKRENIQ…DNVSVIIIFF (176 aa)) folds into the PPM-type phosphatase domain.

The protein localises to the virion. The protein is PP2C-like domain-containing protein R307 of Acanthamoeba polyphaga mimivirus (APMV).